The chain runs to 497 residues: Vacuolar-processing enzyme (497 aa).

An N-terminal signal peptide occupies residues 1 to 31 (METHKSLLFFTNYVLFLVFTLSFLPIPGLLA). Residue His180 is part of the active site. Cys222 acts as the Nucleophile in catalysis. An intrachain disulfide couples Cys255 to Cys269. N-linked (GlcNAc...) asparagine glycans are attached at residues Asn320 and Asn374. Intrachain disulfides connect Cys433–Cys463 and Cys445–Cys480.

This sequence belongs to the peptidase C13 family.

In terms of biological role, asparagine-specific endopeptidase involved in the processing of vacuolar seed protein precursors into the mature forms. This chain is Vacuolar-processing enzyme, found in Ricinus communis (Castor bean).